We begin with the raw amino-acid sequence, 485 residues long: Aspartyl/glutamyl-tRNA(Asn/Gln) amidotransferase subunit B (485 aa).

This sequence belongs to the GatB/GatE family. GatB subfamily. As to quaternary structure, heterotrimer of A, B and C subunits.

It carries out the reaction L-glutamyl-tRNA(Gln) + L-glutamine + ATP + H2O = L-glutaminyl-tRNA(Gln) + L-glutamate + ADP + phosphate + H(+). The enzyme catalyses L-aspartyl-tRNA(Asn) + L-glutamine + ATP + H2O = L-asparaginyl-tRNA(Asn) + L-glutamate + ADP + phosphate + 2 H(+). Allows the formation of correctly charged Asn-tRNA(Asn) or Gln-tRNA(Gln) through the transamidation of misacylated Asp-tRNA(Asn) or Glu-tRNA(Gln) in organisms which lack either or both of asparaginyl-tRNA or glutaminyl-tRNA synthetases. The reaction takes place in the presence of glutamine and ATP through an activated phospho-Asp-tRNA(Asn) or phospho-Glu-tRNA(Gln). The chain is Aspartyl/glutamyl-tRNA(Asn/Gln) amidotransferase subunit B from Paramagnetospirillum magneticum (strain ATCC 700264 / AMB-1) (Magnetospirillum magneticum).